The following is a 378-amino-acid chain: UPF0754 membrane protein Exig_0680 (378 aa).

A run of 2 helical transmembrane segments spans residues 5 to 25 (VDLV…GAVT) and 357 to 377 (ITWL…ILLI).

The protein belongs to the UPF0754 family.

The protein resides in the cell membrane. The polypeptide is UPF0754 membrane protein Exig_0680 (Exiguobacterium sibiricum (strain DSM 17290 / CCUG 55495 / CIP 109462 / JCM 13490 / 255-15)).